The following is a 615-amino-acid chain: Isocitrate dehydrogenase kinase/phosphatase (615 aa).

Residues 328 to 334 and lysine 349 each bind ATP; that span reads APGIRGL. Residue aspartate 384 is part of the active site. The interval 595–615 is disordered; it reads AEPPATPPVKQPDAGPARRVA.

Belongs to the AceK family.

Its subcellular location is the cytoplasm. It catalyses the reaction L-seryl-[isocitrate dehydrogenase] + ATP = O-phospho-L-seryl-[isocitrate dehydrogenase] + ADP + H(+). Its function is as follows. Bifunctional enzyme which can phosphorylate or dephosphorylate isocitrate dehydrogenase (IDH) on a specific serine residue. This is a regulatory mechanism which enables bacteria to bypass the Krebs cycle via the glyoxylate shunt in response to the source of carbon. When bacteria are grown on glucose, IDH is fully active and unphosphorylated, but when grown on acetate or ethanol, the activity of IDH declines drastically concomitant with its phosphorylation. The chain is Isocitrate dehydrogenase kinase/phosphatase from Cupriavidus taiwanensis (strain DSM 17343 / BCRC 17206 / CCUG 44338 / CIP 107171 / LMG 19424 / R1) (Ralstonia taiwanensis (strain LMG 19424)).